Consider the following 189-residue polypeptide: Flavin prenyltransferase UbiX (189 aa).

FMN-binding positions include Gly11–Ser13, Ser37, Ser88–Thr91, and Arg123. Dimethylallyl phosphate is bound at residue Tyr153.

The protein belongs to the UbiX/PAD1 family.

The enzyme catalyses dimethylallyl phosphate + FMNH2 = prenylated FMNH2 + phosphate. Flavin prenyltransferase that catalyzes the synthesis of the prenylated FMN cofactor (prenyl-FMN) for 4-hydroxy-3-polyprenylbenzoic acid decarboxylase UbiD. The prenyltransferase is metal-independent and links a dimethylallyl moiety from dimethylallyl monophosphate (DMAP) to the flavin N5 and C6 atoms of FMN. The chain is Flavin prenyltransferase UbiX from Neisseria meningitidis serogroup B (strain ATCC BAA-335 / MC58).